Here is a 490-residue protein sequence, read N- to C-terminus: Protein nucleotidyltransferase YdiU (490 aa).

Residues glycine 86, glycine 88, arginine 89, lysine 109, aspartate 121, glycine 122, arginine 172, and arginine 179 each contribute to the ATP site. Aspartate 248 acts as the Proton acceptor in catalysis. Residues asparagine 249 and aspartate 258 each contribute to the Mg(2+) site. An ATP-binding site is contributed by aspartate 258.

The protein belongs to the SELO family. The cofactor is Mg(2+). It depends on Mn(2+) as a cofactor.

The catalysed reaction is L-seryl-[protein] + ATP = 3-O-(5'-adenylyl)-L-seryl-[protein] + diphosphate. It carries out the reaction L-threonyl-[protein] + ATP = 3-O-(5'-adenylyl)-L-threonyl-[protein] + diphosphate. It catalyses the reaction L-tyrosyl-[protein] + ATP = O-(5'-adenylyl)-L-tyrosyl-[protein] + diphosphate. The enzyme catalyses L-histidyl-[protein] + UTP = N(tele)-(5'-uridylyl)-L-histidyl-[protein] + diphosphate. The catalysed reaction is L-seryl-[protein] + UTP = O-(5'-uridylyl)-L-seryl-[protein] + diphosphate. It carries out the reaction L-tyrosyl-[protein] + UTP = O-(5'-uridylyl)-L-tyrosyl-[protein] + diphosphate. In terms of biological role, nucleotidyltransferase involved in the post-translational modification of proteins. It can catalyze the addition of adenosine monophosphate (AMP) or uridine monophosphate (UMP) to a protein, resulting in modifications known as AMPylation and UMPylation. This chain is Protein nucleotidyltransferase YdiU, found in Rhizobium meliloti (strain 1021) (Ensifer meliloti).